A 296-amino-acid polypeptide reads, in one-letter code: NAD kinase (296 aa).

The Proton acceptor role is filled by Asp73. Residues 73–74 (DG), Lys78, 151–152 (NE), Arg178, Asp180, and 191–196 (TAHAMS) each bind NAD(+).

It belongs to the NAD kinase family. A divalent metal cation serves as cofactor.

The protein resides in the cytoplasm. The catalysed reaction is NAD(+) + ATP = ADP + NADP(+) + H(+). In terms of biological role, involved in the regulation of the intracellular balance of NAD and NADP, and is a key enzyme in the biosynthesis of NADP. Catalyzes specifically the phosphorylation on 2'-hydroxyl of the adenosine moiety of NAD to yield NADP. The chain is NAD kinase from Francisella tularensis subsp. tularensis (strain FSC 198).